A 145-amino-acid polypeptide reads, in one-letter code: Cytochrome c2 (145 aa).

A signal peptide spans Met1–Ala21. Gln22 bears the Pyrrolidone carboxylic acid mark. Cys36, Cys39, His40, and Met121 together coordinate heme c.

This sequence belongs to the cytochrome c family. In terms of processing, binds 1 heme c group covalently per subunit.

It localises to the periplasm. Cytochrome c2 is found mainly in purple, non-sulfur, photosynthetic bacteria where it functions as the electron donor to the oxidized bacteriochlorophyll in the photophosphorylation pathway. However, it may also have a role in the respiratory chain and is found in some non-photosynthetic bacteria. This is Cytochrome c2 (cycA) from Cereibacter sphaeroides (strain ATCC 17023 / DSM 158 / JCM 6121 / CCUG 31486 / LMG 2827 / NBRC 12203 / NCIMB 8253 / ATH 2.4.1.) (Rhodobacter sphaeroides).